Consider the following 236-residue polypeptide: Phosphoribosylaminoimidazole-succinocarboxamide synthase (236 aa).

Belongs to the SAICAR synthetase family.

The enzyme catalyses 5-amino-1-(5-phospho-D-ribosyl)imidazole-4-carboxylate + L-aspartate + ATP = (2S)-2-[5-amino-1-(5-phospho-beta-D-ribosyl)imidazole-4-carboxamido]succinate + ADP + phosphate + 2 H(+). It participates in purine metabolism; IMP biosynthesis via de novo pathway; 5-amino-1-(5-phospho-D-ribosyl)imidazole-4-carboxamide from 5-amino-1-(5-phospho-D-ribosyl)imidazole-4-carboxylate: step 1/2. In Lactococcus lactis subsp. cremoris (Streptococcus cremoris), this protein is Phosphoribosylaminoimidazole-succinocarboxamide synthase (purC).